We begin with the raw amino-acid sequence, 715 residues long: Fatty acid oxidation complex subunit alpha (715 aa).

An enoyl-CoA hydratase/isomerase region spans residues 1 to 190 (MIYEGKAITV…KVGAVDAVVA (190 aa)). Asp297 serves as a coordination point for substrate. The tract at residues 312–715 (HDVKQAAVLG…MAKNGQRFFN (404 aa)) is 3-hydroxyacyl-CoA dehydrogenase. NAD(+)-binding positions include Met325, Asp344, 401–403 (VVE), Lys408, and Ser430. His451 (for 3-hydroxyacyl-CoA dehydrogenase activity) is an active-site residue. An NAD(+)-binding site is contributed by Asn454. Residues Asn501 and Tyr660 each contribute to the substrate site.

It in the N-terminal section; belongs to the enoyl-CoA hydratase/isomerase family. This sequence in the C-terminal section; belongs to the 3-hydroxyacyl-CoA dehydrogenase family. Heterotetramer of two alpha chains (FadB) and two beta chains (FadA).

The catalysed reaction is a (3S)-3-hydroxyacyl-CoA + NAD(+) = a 3-oxoacyl-CoA + NADH + H(+). The enzyme catalyses a (3S)-3-hydroxyacyl-CoA = a (2E)-enoyl-CoA + H2O. It carries out the reaction a 4-saturated-(3S)-3-hydroxyacyl-CoA = a (3E)-enoyl-CoA + H2O. It catalyses the reaction (3S)-3-hydroxybutanoyl-CoA = (3R)-3-hydroxybutanoyl-CoA. The catalysed reaction is a (3Z)-enoyl-CoA = a 4-saturated (2E)-enoyl-CoA. The enzyme catalyses a (3E)-enoyl-CoA = a 4-saturated (2E)-enoyl-CoA. The protein operates within lipid metabolism; fatty acid beta-oxidation. Functionally, involved in the aerobic and anaerobic degradation of long-chain fatty acids via beta-oxidation cycle. Catalyzes the formation of 3-oxoacyl-CoA from enoyl-CoA via L-3-hydroxyacyl-CoA. It can also use D-3-hydroxyacyl-CoA and cis-3-enoyl-CoA as substrate. This Pseudomonas entomophila (strain L48) protein is Fatty acid oxidation complex subunit alpha.